A 282-amino-acid polypeptide reads, in one-letter code: (4-alkanoyl-5-oxo-2,5-dihydrofuran-3-yl)methyl phosphate reductase (282 aa).

Residue 6–11 coordinates NADP(+); sequence GATGAV.

This sequence belongs to the NmrA-type oxidoreductase family.

It carries out the reaction a [(3S,4R)-4-alkanoyl-5-oxooxolan-3-yl]methyl phosphate + NADP(+) = a (4-alkanoyl-5-oxo-2,5-dihydrofuran-3-yl)methyl phosphate + NADPH + H(+). It catalyses the reaction [(3S,4R)-4-(6-methylheptanoyl)-5-oxooxolan-3-yl]methyl phosphate + NADP(+) = [4-(6-methylheptanoyl)-5-oxo-2H-furan-3-yl]methyl phosphate + NADPH + H(+). Involved in the biosynthesis of A factor (2-isocapryloyl-3R-hydroxymethyl-gamma-butyrolactone), a gamma-butyrolactone autoregulator that triggers secondary metabolism and morphogenesis in Streptomyces. Catalyzes the reduction of the butenolide phosphate produced by nonenzymatic intramolecular condensation of the 8-methyl-3-oxononanoyl-DHAP ester. The protein is (4-alkanoyl-5-oxo-2,5-dihydrofuran-3-yl)methyl phosphate reductase of Streptomyces griseus subsp. griseus (strain JCM 4626 / CBS 651.72 / NBRC 13350 / KCC S-0626 / ISP 5235).